Reading from the N-terminus, the 317-residue chain is Melanocyte-stimulating hormone receptor (317 aa).

The Extracellular segment spans residues 1–37; that stretch reads MSVQGPQRRLLGSLNSTSPAAPRLGLAANQTGPRCLE. Asn-15 and Asn-29 each carry an N-linked (GlcNAc...) asparagine glycan. The chain crosses the membrane as a helical span at residues 38–63; it reads VSVPDGLFLSLGLVSVVENVLVVAAI. Residues 64 to 72 lie on the Cytoplasmic side of the membrane; that stretch reads AKNRNLHSP. Residues 73–93 form a helical membrane-spanning segment; the sequence is MYYFICCLAVSDLLVSVSSVL. The Extracellular segment spans residues 94–118; sequence ETAVMLLLEAGTLAGRAAVVQQLDD. A helical transmembrane segment spans residues 119–140; sequence VIDVLVCGAMVSSLCFLGAIAV. Residues 141-163 are Cytoplasmic-facing; the sequence is DRYISIFYALRYHSIVTLPRAWR. The chain crosses the membrane as a helical span at residues 164-183; that stretch reads AISAIWVASVLSSTLFIAYY. Residues 184 to 191 lie on the Extracellular side of the membrane; it reads DHTAVLLC. Residues 192–211 traverse the membrane as a helical segment; sequence LVSFFVAMLVLMAVLYVHML. Residues 212–240 lie on the Cytoplasmic side of the membrane; it reads ARACQHARGIARLHKRQRPVHQGLGLKGA. Residues 241-266 form a helical membrane-spanning segment; that stretch reads ATLTILLGIFFLCWGPFFLHLSLMVL. Topologically, residues 267–279 are extracellular; sequence CPRHPICGCVFKN. The chain crosses the membrane as a helical span at residues 280-300; the sequence is FNLFLTLIICNSIVDPLIYAF. Over 301-317 the chain is Cytoplasmic; sequence RSQELRKTLQEVLLCSW. A lipid anchor (S-palmitoyl cysteine) is attached at Cys-315.

It belongs to the G-protein coupled receptor 1 family. Interacts with MGRN1, but does not undergo MGRN1-mediated ubiquitination; this interaction competes with GNAS-binding and thus inhibits agonist-induced cAMP production. Interacts with OPN3; the interaction results in a decrease in MC1R-mediated cAMP signaling and ultimately a decrease in melanin production in melanocytes.

It localises to the cell membrane. Receptor for MSH (alpha, beta and gamma) and ACTH. The activity of this receptor is mediated by G proteins which activate adenylate cyclase. Mediates melanogenesis, the production of eumelanin (black/brown) and phaeomelanin (red/yellow), via regulation of cAMP signaling in melanocytes. The protein is Melanocyte-stimulating hormone receptor (MC1R) of Panthera onca (Jaguar).